A 164-amino-acid chain; its full sequence is Phosphopantetheine adenylyltransferase (164 aa).

T9 provides a ligand contact to substrate. Residues 9 to 10 (TF) and H17 contribute to the ATP site. Substrate is bound by residues K41, L78, and R92. Residues 93–95 (GLR), E103, and 128–134 (RQAIASK) each bind ATP.

It belongs to the bacterial CoaD family. As to quaternary structure, homohexamer. The cofactor is Mg(2+).

The protein localises to the cytoplasm. It catalyses the reaction (R)-4'-phosphopantetheine + ATP + H(+) = 3'-dephospho-CoA + diphosphate. Its pathway is cofactor biosynthesis; coenzyme A biosynthesis; CoA from (R)-pantothenate: step 4/5. In terms of biological role, reversibly transfers an adenylyl group from ATP to 4'-phosphopantetheine, yielding dephospho-CoA (dPCoA) and pyrophosphate. This Paracoccus denitrificans (strain Pd 1222) protein is Phosphopantetheine adenylyltransferase.